Here is a 342-residue protein sequence, read N- to C-terminus: Cyclin pch1 (342 aa).

The disordered stretch occupies residues 261-342 (LPIDQKNGSH…TDKEMETEAS (82 aa)). Residues 278–314 (TPSSLASVSTQATPQHQNSSGRTDSFHSLNTETPSKS) show a composition bias toward polar residues. Threonine 300 carries the post-translational modification Phosphothreonine. Serine 302 bears the Phosphoserine mark. Over residues 329-342 (KSSDTDKEMETEAS) the composition is skewed to basic and acidic residues.

The protein belongs to the cyclin family. Cyclin C subfamily. As to quaternary structure, interacts with cdc2 protein kinase and with the N-terminal domain of cdk9.

The protein localises to the nucleus. Its function is as follows. Essential for progression through the whole cell cycle. The chain is Cyclin pch1 (pch1) from Schizosaccharomyces pombe (strain 972 / ATCC 24843) (Fission yeast).